A 264-amino-acid chain; its full sequence is MQPYLDLMRHVHEHGTDKADRTGTGTRSVFGHQMRFDLQQGFPLVTTKKVHIKSIVYELLWFLQGATNVRWLRENGVTIWDEWADAEGELGPIYGYQWRSWPTPSGEHIDQIAELIAQIKRNPDSRRLIVSAWNVADIPRMKLPPCHAFFQFYVADGKLSCQLYQRSADIFLGVPFNIASYALLTHMIAQQTGLDVGDFVWTGGDCHLYNNHFEQVETQLARTPLPLPKLHIKRKPDSIFDYRYEDFEIVGYESHPAIKAPVAV.

Residue Arg-21 coordinates dUMP. His-51 contacts (6R)-5,10-methylene-5,6,7,8-tetrahydrofolate. Residue 126–127 coordinates dUMP; that stretch reads RR. Cys-146 serves as the catalytic Nucleophile. Residues 166 to 169, Asn-177, and 207 to 209 contribute to the dUMP site; these read RSAD and HLY. (6R)-5,10-methylene-5,6,7,8-tetrahydrofolate is bound at residue Asp-169. (6R)-5,10-methylene-5,6,7,8-tetrahydrofolate is bound at residue Ala-263.

It belongs to the thymidylate synthase family. Bacterial-type ThyA subfamily. As to quaternary structure, homodimer.

The protein localises to the cytoplasm. It catalyses the reaction dUMP + (6R)-5,10-methylene-5,6,7,8-tetrahydrofolate = 7,8-dihydrofolate + dTMP. It functions in the pathway pyrimidine metabolism; dTTP biosynthesis. In terms of biological role, catalyzes the reductive methylation of 2'-deoxyuridine-5'-monophosphate (dUMP) to 2'-deoxythymidine-5'-monophosphate (dTMP) while utilizing 5,10-methylenetetrahydrofolate (mTHF) as the methyl donor and reductant in the reaction, yielding dihydrofolate (DHF) as a by-product. This enzymatic reaction provides an intracellular de novo source of dTMP, an essential precursor for DNA biosynthesis. The chain is Thymidylate synthase from Ralstonia nicotianae (strain ATCC BAA-1114 / GMI1000) (Ralstonia solanacearum).